The primary structure comprises 59 residues: Ferredoxin (59 aa).

The region spanning 2-29 is the 4Fe-4S ferredoxin-type domain; it reads KVSVDKDACIGCGVCASICPDVFEMDDD. Positions 10, 13, and 16 each coordinate [4Fe-4S] cluster. Cysteines 20 and 43 form a disulfide. C51 lines the [4Fe-4S] cluster pocket.

The cofactor is [4Fe-4S] cluster. [3Fe-4S] cluster serves as cofactor.

Its function is as follows. Ferredoxins are iron-sulfur proteins that transfer electrons in a wide variety of metabolic reactions. This Thermococcus litoralis protein is Ferredoxin.